The following is a 37-amino-acid chain: Cytochrome b6-f complex subunit 5 (37 aa).

A helical transmembrane segment spans residues 5 to 25 (LPSGIVLGLIPITLAGLFVTA).

This sequence belongs to the PetG family. As to quaternary structure, the 4 large subunits of the cytochrome b6-f complex are cytochrome b6, subunit IV (17 kDa polypeptide, PetD), cytochrome f and the Rieske protein, while the 4 small subunits are PetG, PetL, PetM and PetN. The complex functions as a dimer.

Its subcellular location is the plastid. The protein resides in the chloroplast thylakoid membrane. Component of the cytochrome b6-f complex, which mediates electron transfer between photosystem II (PSII) and photosystem I (PSI), cyclic electron flow around PSI, and state transitions. PetG is required for either the stability or assembly of the cytochrome b6-f complex. This Pinus thunbergii (Japanese black pine) protein is Cytochrome b6-f complex subunit 5.